The sequence spans 356 residues: MIELKNISVTFQQKKQEIQAVQDVSLTIDKGDIYGIVGYSGAGKSTLVRVINLLQRPTAGTVIINKENILTFSKKELRQQRKKIGMIFQHFNLMKERTIFSNIDFSLKYSGLSKSERRQKISHLLELVGLSEKRDAYPSQLSGGQKQRVAIARALANDPEILLCDEATSALDPKTTGQILALLKKLNQELNLTIVLITHEMQVVKEICNKVAVMENGCVVESNDIVSIFSQPQQPLTKDFIRTATHIDQALTTILEHPKLADLDKNQELIEFSYVGDQTNEPLIAQLYSQYQVYTNILYGNVEIVQNVPIGHLIVVLSGDEAQRQQALTYLAKQGVRTNVLKTYQQTKQKQNLQVI.

One can recognise an ABC transporter domain in the interval 2-241; the sequence is IELKNISVTF…PQQPLTKDFI (240 aa). 38–45 is a binding site for ATP; that stretch reads GYSGAGKS.

The protein belongs to the ABC transporter superfamily. Methionine importer (TC 3.A.1.24) family. The complex is composed of two ATP-binding proteins (MetN), two transmembrane proteins (MetI) and a solute-binding protein (MetQ).

Its subcellular location is the cell membrane. The catalysed reaction is L-methionine(out) + ATP + H2O = L-methionine(in) + ADP + phosphate + H(+). It catalyses the reaction D-methionine(out) + ATP + H2O = D-methionine(in) + ADP + phosphate + H(+). Part of the ABC transporter complex MetNIQ involved in methionine import. Responsible for energy coupling to the transport system. This is Methionine import ATP-binding protein MetN 1 from Enterococcus faecalis (strain ATCC 700802 / V583).